Here is a 519-residue protein sequence, read N- to C-terminus: Membrane-bound glycerophospholipid O-acyltransferase 2 (519 aa).

Helical transmembrane passes span 22–42 (PIDQ…AVWF), 61–81 (TLLG…HFLV), 88–108 (CIMI…FALG), 184–204 (FMGI…FIEG), 236–256 (LLVC…LPVE), and 263–283 (FQAT…LLAA). Residues asparagine 341 and histidine 372 contribute to the active site. A run of 3 helical transmembrane segments spans residues 365-385 (FFLS…FLTG), 415-435 (LITW…FVLL), and 443-463 (FYSS…LLLP). Residues 497 to 519 (FSTMNNVCNQNRDTGSRHSSLTQ) are disordered.

This sequence belongs to the membrane-bound acyltransferase family. As to expression, highly expressed in epididymis, brain, testis, and ovary.

The protein localises to the endoplasmic reticulum membrane. The enzyme catalyses a 1-acyl-sn-glycero-3-phosphocholine + an acyl-CoA = a 1,2-diacyl-sn-glycero-3-phosphocholine + CoA. It carries out the reaction a 1-acyl-sn-glycero-3-phosphoethanolamine + an acyl-CoA = a 1,2-diacyl-sn-glycero-3-phosphoethanolamine + CoA. The catalysed reaction is a 1-O-(1Z-alkenyl)-sn-glycero-3-phosphocholine + (9Z)-octadecenoyl-CoA = 1-O-(1Z)-alkenyl-2-(9Z)-octadecenoyl-sn-glycero-3-phosphocholine + CoA. It catalyses the reaction a 1-O-(1Z-alkenyl)-sn-glycero-3-phosphoethanolamine + (9Z)-octadecenoyl-CoA = 1-O-(1Z)-alkenyl-2-(9Z)-octadecenoyl-sn-glycero-3-phosphoethanolamine + CoA. The enzyme catalyses 1-octadecanoyl-sn-glycero-3-phosphoethanolamine + (9Z)-octadecenoyl-CoA = 1-octadecanoyl-2-(9Z-octadecenoyl)-sn-glycero-3-phosphoethanolamine + CoA. It carries out the reaction 1-octadecanoyl-sn-glycero-3-phosphocholine + (9Z)-octadecenoyl-CoA = 1-octadecanoyl-2-(9Z-octadecenoyl)-sn-glycero-3-phosphocholine + CoA. The catalysed reaction is 1-(9Z-octadecenoyl)-sn-glycero-3-phosphoethanolamine + (9Z)-octadecenoyl-CoA = 1,2-di-(9Z-octadecenoyl)-sn-glycero-3-phosphoethanolamine + CoA. It catalyses the reaction 1-hexadecanoyl-sn-glycero-3-phosphoethanolamine + (9Z)-octadecenoyl-CoA = 1-hexadecanoyl-2-(9Z-octadecenoyl)-sn-glycero-3-phosphoethanolamine + CoA. The enzyme catalyses 1-hexadecanoyl-sn-glycero-3-phosphocholine + (9Z)-octadecenoyl-CoA = 1-hexadecanoyl-2-(9Z-octadecenoyl)-sn-glycero-3-phosphocholine + CoA. It carries out the reaction (9Z)-hexadecenoyl-CoA + 1-hexadecanoyl-sn-glycero-3-phosphocholine = 1-hexadecanoyl-2-(9Z-hexadecenoyl)-sn-glycero-3-phosphocholine + CoA. The catalysed reaction is 1-hexadecanoyl-sn-glycero-3-phosphoethanolamine + (9Z)-hexadecenoyl-CoA = 1-hexadecanoyl-2-(9Z)-hexadecenoyl-sn-glycero-3-phosphoethanolamine + CoA. It catalyses the reaction (9Z,12Z)-octadecadienoyl-CoA + 1-hexadecanoyl-sn-glycero-3-phosphocholine = 1-hexadecanoyl-2-(9Z,12Z-octadecadienoyl)-sn-glycero-3-phosphocholine + CoA. It functions in the pathway lipid metabolism; phospholipid metabolism. Its activity is regulated as follows. Partially inhibited by thimerosal. Functionally, acyltransferase which catalyzes the transfer of an acyl group from an acyl-CoA to a lysophospholipid leading to the production of a phospholipid and participates in the reacylation step of the phospholipid remodeling pathway also known as the Lands cycle. Catalyzes the acylation of lysophosphatidylcholine (1-acyl-sn-glycero-3-phosphocholine or LPC) and to a lesser extend lysophosphatidylethanolamine (1-acyl-sn-glycero-3-phosphoethanolamine or LPE). Does not acylates lysophosphatidic acid (LPA) and lysophosphatidylserine. Prefers oleoyl-CoA as the acyl donor. May be involved in chondrocyte differentiation. This chain is Membrane-bound glycerophospholipid O-acyltransferase 2, found in Mus musculus (Mouse).